An 86-amino-acid chain; its full sequence is Electron transfer flavoprotein regulatory factor 1 (86 aa).

Belongs to the complex I LYR family.

It localises to the mitochondrion. Acts as a regulator of the electron transfer flavoprotein by promoting the removal of flavin from the ETF holoenzyme (composed of ETFA and ETFB). This chain is Electron transfer flavoprotein regulatory factor 1, found in Taeniopygia guttata (Zebra finch).